The following is a 663-amino-acid chain: MAPIEIPRGQASYKKREGIITLTPDKTALIWSPLPGTGPPVISLSVSNITNLQQTPKTNPKVVLRVVEKPKAPGADPAAYPFQFTHATEARNEADAIKDLLSQIIAELRGDDPSLPKPAKSGPNGAGASAAMAMASAVNSKHLPFRWFEDDMLKADVELQQSLMKKDKALAHIYNDAKLSKPDSLSDASFNSQFWATRISLLRAYAIELNQKKGSYNVLSTIKPRTENGELKLNINHEQVQLIFQQHPLVKRIYNENVPKLTESEFWSRFFLSRLSKKLRGERITDNDNTDPLFDKYLEADNTMAVPAKITATSVPPIINIEGNEENQGGFRGGNLKDVEMRPRANIPIIKTLNSLSEKIMANVAPTDVDPSAASYSKDGIADALSKQLALQDLRGDAEAQLIRLSVKDTSTFFTGNQPSLTDQEAADARLYATQVPSDVLFEVQADMDTLDSDGRGGIDLHRSIGVDPDSDDEGNNSLDSKSGPKPQHVGSRAALRFAQNQILESMKSARSHLTTTTTHGGSHTTTTNASEERPMSLPTDIAHRATLTCATTAEFLKQFWTVFNNSSNSSPEKQQELAYLADSLVRSKQRIEALADEAEKRRQEIMEKRKREIREYYQKTGRKAKWVPVGGGRDAVWAAFEGVVGGLERAVAVWEMVKSGRI.

BSD domains are found at residues 147-206 (WFED…RAYA) and 227-278 (ENGE…LSKK). Disordered regions lie at residues 452 to 491 (DSDG…QHVG) and 513 to 535 (HLTT…EERP). Positions 453–465 (SDGRGGIDLHRSI) are enriched in basic and acidic residues. Residues 515 to 528 (TTTTTHGGSHTTTT) show a composition bias toward low complexity.

Belongs to the TFB1 family. In terms of assembly, component of the 7-subunit TFIIH core complex composed of XPB/rad25, XPD/dnr-10, tcf-30/SSL1, tcf-29/TFB1, tcf-11/TFB2, tcf-14/TFB4 and rtf-1/TFB5, which is active in NER. The core complex associates with the 3-subunit CTD-kinase module TFIIK composed of div-66/cyclin H, prk-3/KIN28 and rtf-2/TFB3 to form the 10-subunit holoenzyme (holo-TFIIH) active in transcription.

The protein resides in the nucleus. Functionally, component of the general transcription and DNA repair factor IIH (TFIIH) core complex, which is involved in general and transcription-coupled nucleotide excision repair (NER) of damaged DNA and, when complexed to TFIIK, in RNA transcription by RNA polymerase II. In NER, TFIIH acts by opening DNA around the lesion to allow the excision of the damaged oligonucleotide and its replacement by a new DNA fragment. In transcription, TFIIH has an essential role in transcription initiation. When the pre-initiation complex (PIC) has been established, TFIIH is required for promoter opening and promoter escape. Phosphorylation of the C-terminal tail (CTD) of the largest subunit of RNA polymerase II by the kinase module TFIIK controls the initiation of transcription. The chain is General transcription and DNA repair factor IIH subunit tcf-29 (tcf-29) from Neurospora crassa (strain ATCC 24698 / 74-OR23-1A / CBS 708.71 / DSM 1257 / FGSC 987).